We begin with the raw amino-acid sequence, 545 residues long: MEIESVAAGSCSKENQMIYKEWFEFSDSDGDGRITGNDAIKFFTMSNLPRPELKQIWAIADSKRQGYLGFKEFIVAMQLVSLAQTGHEISHEVLISDVDFKNINPPTMEGLGVLMAKKKHSSKSSDPNMNGSPAADTSLTAHWFSSKSSKKISLSSVTSIVDGLKRLYIQKLKPLEVAYRFNDFVSPLLTNSDFDAKPMVMLLGQYSTGKTTFIKHLLKSTYPGAHIGPEPTTDRFVVVMSGPDERSIPGNTVAVQADMPFSGLTTFGTAFLSKFECSQMPHPLLEHVTFVDTPGVLSGEKQRTQRAYDFTGVTSWFASKCDLILLLFDPHKLDVSDEFKRVISSLRGHDDKIRVVLNKADQVDTQQLMRVYGALMWSLGKVLNTPEVSRVYIGSFSDKPINEAATGPIGRELFEKEQDDLLADLKDIPKKACDRRINEFVKRARAAKIHAYIISHLKKEMPAIMGKAKAQQKLIDNLEDEFGKVQREHHLPKGDFPNVDHFREVLSGYNIDKFEKLKPKMLQTVDDMLGYDIPELLKNFKNPYD.

2 consecutive EF-hand domains span residues glutamate 14–proline 49 and arginine 50–alanine 83. The 79-residue stretch at asparagine 15–valine 93 folds into the EH domain. The Ca(2+) site is built by aspartate 27, aspartate 29, aspartate 31, arginine 33, aspartate 38, aspartate 61, tyrosine 67, and glutamate 72. The Dynamin-type G domain occupies phenylalanine 194 to proline 429. Residues glycine 204–threonine 211 form a G1 motif region. Glycine 204–threonine 211 contributes to the GTP binding site. The segment at glutamate 230–proline 231 is G2 motif. The tract at residues aspartate 292–glycine 295 is G3 motif. Residues aspartate 309–valine 313 and lysine 359 contribute to the GTP site. The interval asparagine 358–aspartate 361 is G4 motif. Residue valine 382 is a region of interest, G5 motif. Serine 395 to aspartate 398 serves as a coordination point for GTP. Positions lysine 467–histidine 490 form a coiled coil.

This sequence belongs to the TRAFAC class dynamin-like GTPase superfamily. Dynamin/Fzo/YdjA family. EHD subfamily. As to quaternary structure, homooligomer, and heterooligomer with EHD2.

It is found in the endosome membrane. Its subcellular location is the cell membrane. The protein localises to the cytoplasm. It carries out the reaction GTP + H2O = GDP + phosphate + H(+). Its function is as follows. Involved in endocytosis positive regulation. Acts in early endocytic membrane fusion and membrane trafficking of recycling endosomes. Confers salt tolerance. The polypeptide is EH domain-containing protein 1 (Arabidopsis thaliana (Mouse-ear cress)).